Here is a 516-residue protein sequence, read N- to C-terminus: GMP synthase [glutamine-hydrolyzing] (516 aa).

A Glutamine amidotransferase type-1 domain is found at 8 to 198 (KILILDFGSQ…VVNICGCDTL (191 aa)). Residue Cys-84 is the Nucleophile of the active site. Catalysis depends on residues His-172 and Glu-174. Residues 199–391 (WNIENIIEND…LGLPYNMLYR (193 aa)) form the GMPS ATP-PPase domain. Position 226–232 (226–232 (SGGVDSS)) interacts with ATP.

In terms of assembly, homodimer.

It carries out the reaction XMP + L-glutamine + ATP + H2O = GMP + L-glutamate + AMP + diphosphate + 2 H(+). It participates in purine metabolism; GMP biosynthesis; GMP from XMP (L-Gln route): step 1/1. Functionally, catalyzes the synthesis of GMP from XMP. This Francisella tularensis subsp. tularensis (strain WY96-3418) protein is GMP synthase [glutamine-hydrolyzing].